Reading from the N-terminus, the 592-residue chain is Bifunctional dolabella-3,7-dien-18-ol synthase/dolathalia-3,7,11-triene synthase TPS20, chloroplastic (592 aa).

The transit peptide at 1 to 52 (MEAITKNGSLSQTLVHCGPKSLSSFIPVRCLRFSKNPFPKKLVVTRARTSIN) directs the protein to the chloroplast. Residues aspartate 349, aspartate 353, aspartate 491, threonine 495, and glutamate 499 each contribute to the Mg(2+) site. Residues 349–353 (DDLYD) carry the DDXXD motif motif.

This sequence belongs to the terpene synthase family. Tpsa subfamily. It depends on Mg(2+) as a cofactor. The cofactor is Mn(2+).

It localises to the plastid. Its subcellular location is the chloroplast. It catalyses the reaction (2E,6E,10E)-geranylgeranyl diphosphate + H2O = (3E,7E)-dolabella-3,7-dien-18-ol + diphosphate. The catalysed reaction is (2E,6E,10E)-geranylgeranyl diphosphate = (3E,7E)-dolathalia-3,7,11-triene + diphosphate. The protein operates within secondary metabolite biosynthesis; terpenoid biosynthesis. Functionally, involved in the biosynthesis of diterpenes in roots. Possesses dolabella-3,7-dien-18-ol synthase activity and dolathalia-3,7,11-triene synthase activity in vitro. Catalyzes the formation of dolabella-3,7-dien-18-ol and dolathalia-3,7,11-triene from geranygeranyl diphosphate (GGPP). Does not seem to be involved in sesquiterpene biosynthesis. The chain is Bifunctional dolabella-3,7-dien-18-ol synthase/dolathalia-3,7,11-triene synthase TPS20, chloroplastic from Arabidopsis thaliana (Mouse-ear cress).